A 284-amino-acid chain; its full sequence is Bifunctional protein FolD (284 aa).

Residues 165-167 and Ser-190 contribute to the NADP(+) site; that span reads GRS.

Belongs to the tetrahydrofolate dehydrogenase/cyclohydrolase family. In terms of assembly, homodimer.

The catalysed reaction is (6R)-5,10-methylene-5,6,7,8-tetrahydrofolate + NADP(+) = (6R)-5,10-methenyltetrahydrofolate + NADPH. It catalyses the reaction (6R)-5,10-methenyltetrahydrofolate + H2O = (6R)-10-formyltetrahydrofolate + H(+). It functions in the pathway one-carbon metabolism; tetrahydrofolate interconversion. Functionally, catalyzes the oxidation of 5,10-methylenetetrahydrofolate to 5,10-methenyltetrahydrofolate and then the hydrolysis of 5,10-methenyltetrahydrofolate to 10-formyltetrahydrofolate. This chain is Bifunctional protein FolD, found in Streptococcus sanguinis (strain SK36).